The chain runs to 388 residues: S-adenosylmethionine synthase (388 aa).

An ATP-binding site is contributed by H16. A Mg(2+)-binding site is contributed by D18. E44 serves as a coordination point for K(+). Residues E57 and Q100 each contribute to the L-methionine site. Residues 100 to 110 form a flexible loop region; sequence QSPEIAQGVDR. ATP-binding positions include 165–167, 231–232, D240, 246–247, A263, and K267; these read DAK, KF, and RK. D240 lines the L-methionine pocket. K271 serves as a coordination point for L-methionine.

It belongs to the AdoMet synthase family. In terms of assembly, homotetramer; dimer of dimers. Mg(2+) serves as cofactor. The cofactor is K(+).

It is found in the cytoplasm. It carries out the reaction L-methionine + ATP + H2O = S-adenosyl-L-methionine + phosphate + diphosphate. It functions in the pathway amino-acid biosynthesis; S-adenosyl-L-methionine biosynthesis; S-adenosyl-L-methionine from L-methionine: step 1/1. Its function is as follows. Catalyzes the formation of S-adenosylmethionine (AdoMet) from methionine and ATP. The overall synthetic reaction is composed of two sequential steps, AdoMet formation and the subsequent tripolyphosphate hydrolysis which occurs prior to release of AdoMet from the enzyme. This is S-adenosylmethionine synthase from Psychrobacter arcticus (strain DSM 17307 / VKM B-2377 / 273-4).